Consider the following 147-residue polypeptide: Allograft inflammatory factor 1 (147 aa).

Position 2 is an N-acetylserine (Ser-2). Lys-11 is modified (N6-acetyllysine). Ser-39 is subject to Phosphoserine. In terms of domain architecture, EF-hand 1 spans 45 to 80 (SKLEAFKKKYMEFDLNEDGGIDIMSLKRMMEKLGVP). Asp-58, Asn-60, and Asp-62 together coordinate Ca(2+). The EF-hand 2; degenerate domain maps to 81-115 (KTHLELKKLIMEVSSGPGETFSYSDFLKMMLGKRS). The interval 128 to 147 (AREQEKPTGLPAKKAISELP) is disordered.

Phosphorylated on serine residues.

The protein localises to the cytoplasm. It is found in the cytoskeleton. The protein resides in the cell projection. Its subcellular location is the ruffle membrane. It localises to the phagocytic cup. In terms of biological role, may play a role in macrophage activation and function. This is Allograft inflammatory factor 1 (AIF1) from Bos taurus (Bovine).